The primary structure comprises 100 residues: Small ribosomal subunit protein uS14 (100 aa).

The protein belongs to the universal ribosomal protein uS14 family. Part of the 30S ribosomal subunit. Contacts proteins S3 and S10.

In terms of biological role, binds 16S rRNA, required for the assembly of 30S particles and may also be responsible for determining the conformation of the 16S rRNA at the A site. The polypeptide is Small ribosomal subunit protein uS14 (Synechococcus sp. (strain RCC307)).